The sequence spans 491 residues: MSNILRRGRLEAAQDEEILRYTSSMEADRWIFNADIVVDLAHTVMLREQGIIKEEDCSKILSGLLKIREEGMEKLDFSYEDIHISLESRLIDMVGEDVGGRMHSGRSRNDEVATCIRLTLREELLGLLEEIFALRKTLVSLAEKHSETLMPGFTHLQHAQPTTLAHHLCAHESALGRDFDRVQDAFSRVNLCPLGAAAFASTGFNLNRKRTQELLGFEGLLENSMDAVSSRDFLIECASVFSNLMINLSRIAEELVIWSSSEFNFIELDDMYASTSSIMPQKKNPDTAELMRGKTGVSVGALMSLLTICKGLPLSYNRDLQEATPNIWRSVETVRASVRVMEGMVKTMKVHPDVLAAESITGFTTATELADTFVRETGIPFRTAHQIVGMLAKEREKPTMEKIDSASEVVLGESLSSKGLTENMVKEALNPESNIKRRKIPGGPAPEEMKNYLSKRKTELELNAQEIATLKDIIDSAFENLLSVVEEYRKI.

It belongs to the lyase 1 family. Argininosuccinate lyase subfamily.

The protein resides in the cytoplasm. It carries out the reaction 2-(N(omega)-L-arginino)succinate = fumarate + L-arginine. Its pathway is amino-acid biosynthesis; L-arginine biosynthesis; L-arginine from L-ornithine and carbamoyl phosphate: step 3/3. The sequence is that of Argininosuccinate lyase from Methanosarcina mazei (strain ATCC BAA-159 / DSM 3647 / Goe1 / Go1 / JCM 11833 / OCM 88) (Methanosarcina frisia).